We begin with the raw amino-acid sequence, 339 residues long: D-erythrose-4-phosphate dehydrogenase (339 aa).

Position 11–12 (11–12 (RI)) interacts with NAD(+). Substrate is bound by residues 158–160 (SCT), Arg204, 217–218 (TK), and Arg240. The Nucleophile role is filled by Cys159. Asn322 is a binding site for NAD(+).

This sequence belongs to the glyceraldehyde-3-phosphate dehydrogenase family. Epd subfamily. In terms of assembly, homotetramer.

It localises to the cytoplasm. The enzyme catalyses D-erythrose 4-phosphate + NAD(+) + H2O = 4-phospho-D-erythronate + NADH + 2 H(+). It participates in cofactor biosynthesis; pyridoxine 5'-phosphate biosynthesis; pyridoxine 5'-phosphate from D-erythrose 4-phosphate: step 1/5. Functionally, catalyzes the NAD-dependent conversion of D-erythrose 4-phosphate to 4-phosphoerythronate. This is D-erythrose-4-phosphate dehydrogenase from Aliivibrio fischeri (strain MJ11) (Vibrio fischeri).